A 422-amino-acid chain; its full sequence is Imidazolonepropionase (422 aa).

The Fe(3+) site is built by His82 and His84. Zn(2+) contacts are provided by His82 and His84. Arg91, Tyr154, and His187 together coordinate 4-imidazolone-5-propanoate. Tyr154 provides a ligand contact to N-formimidoyl-L-glutamate. Fe(3+) is bound at residue His252. His252 contributes to the Zn(2+) binding site. Glu255 serves as a coordination point for 4-imidazolone-5-propanoate. A Fe(3+)-binding site is contributed by Asp327. Asp327 is a binding site for Zn(2+). The N-formimidoyl-L-glutamate site is built by Asn329 and Gly331. Ser332 is a 4-imidazolone-5-propanoate binding site.

It belongs to the metallo-dependent hydrolases superfamily. HutI family. It depends on Zn(2+) as a cofactor. Fe(3+) is required as a cofactor.

It localises to the cytoplasm. It carries out the reaction 4-imidazolone-5-propanoate + H2O = N-formimidoyl-L-glutamate. The protein operates within amino-acid degradation; L-histidine degradation into L-glutamate; N-formimidoyl-L-glutamate from L-histidine: step 3/3. Its function is as follows. Catalyzes the hydrolytic cleavage of the carbon-nitrogen bond in imidazolone-5-propanoate to yield N-formimidoyl-L-glutamate. It is the third step in the universal histidine degradation pathway. The polypeptide is Imidazolonepropionase (Alkaliphilus metalliredigens (strain QYMF)).